Consider the following 179-residue polypeptide: Large ribosomal subunit protein uL5 (179 aa).

This sequence belongs to the universal ribosomal protein uL5 family. Part of the 50S ribosomal subunit; part of the 5S rRNA/L5/L18/L25 subcomplex. Contacts the 5S rRNA and the P site tRNA. Forms a bridge to the 30S subunit in the 70S ribosome.

Functionally, this is one of the proteins that bind and probably mediate the attachment of the 5S RNA into the large ribosomal subunit, where it forms part of the central protuberance. In the 70S ribosome it contacts protein S13 of the 30S subunit (bridge B1b), connecting the 2 subunits; this bridge is implicated in subunit movement. Contacts the P site tRNA; the 5S rRNA and some of its associated proteins might help stabilize positioning of ribosome-bound tRNAs. The polypeptide is Large ribosomal subunit protein uL5 (Chromobacterium violaceum (strain ATCC 12472 / DSM 30191 / JCM 1249 / CCUG 213 / NBRC 12614 / NCIMB 9131 / NCTC 9757 / MK)).